The chain runs to 234 residues: 2,3-bisphosphoglycerate-dependent phosphoglycerate mutase (234 aa).

Substrate contacts are provided by residues 8–15 (RHGESVWN), 21–22 (TG), Arg-60, 87–90 (ERHY), Lys-98, 114–115 (RR), and 183–184 (GN). The active-site Tele-phosphohistidine intermediate is the His-9. Catalysis depends on Glu-87, which acts as the Proton donor/acceptor.

Belongs to the phosphoglycerate mutase family. BPG-dependent PGAM subfamily. In terms of assembly, homodimer.

It catalyses the reaction (2R)-2-phosphoglycerate = (2R)-3-phosphoglycerate. It participates in carbohydrate degradation; glycolysis; pyruvate from D-glyceraldehyde 3-phosphate: step 3/5. In terms of biological role, catalyzes the interconversion of 2-phosphoglycerate and 3-phosphoglycerate. This is 2,3-bisphosphoglycerate-dependent phosphoglycerate mutase from Geobacter sp. (strain M21).